Here is a 192-residue protein sequence, read N- to C-terminus: Ion-translocating oxidoreductase complex subunit A (192 aa).

Transmembrane regions (helical) follow at residues 5 to 25, 39 to 59, 67 to 87, 102 to 122, 134 to 154, and 171 to 191; these read VLLL…FLGL, IGMG…AYLV, LGIE…VVQF, LLGI…VALL, IIYG…FASM, and SIAM…TGLV.

The protein belongs to the NqrDE/RnfAE family. The complex is composed of six subunits: RnfA, RnfB, RnfC, RnfD, RnfE and RnfG.

The protein resides in the cell inner membrane. Its function is as follows. Part of a membrane-bound complex that couples electron transfer with translocation of ions across the membrane. The polypeptide is Ion-translocating oxidoreductase complex subunit A (Vibrio parahaemolyticus serotype O3:K6 (strain RIMD 2210633)).